Here is a 463-residue protein sequence, read N- to C-terminus: Protein DML1 (463 aa).

This sequence belongs to the misato family.

Its subcellular location is the mitochondrion. Its function is as follows. Involved in the partitioning of the mitochondrial organelle and mitochondrial DNA (mtDNA) inheritance. This chain is Protein DML1 (DML1), found in Debaryomyces hansenii (strain ATCC 36239 / CBS 767 / BCRC 21394 / JCM 1990 / NBRC 0083 / IGC 2968) (Yeast).